The sequence spans 204 residues: LexA repressor (204 aa).

Positions Arg-28 to Lys-48 form a DNA-binding region, H-T-H motif. Catalysis depends on for autocatalytic cleavage activity residues Ser-121 and Lys-158.

Belongs to the peptidase S24 family. In terms of assembly, homodimer.

The enzyme catalyses Hydrolysis of Ala-|-Gly bond in repressor LexA.. Functionally, represses a number of genes involved in the response to DNA damage (SOS response), including recA and lexA. In the presence of single-stranded DNA, RecA interacts with LexA causing an autocatalytic cleavage which disrupts the DNA-binding part of LexA, leading to derepression of the SOS regulon and eventually DNA repair. The protein is LexA repressor of Shewanella frigidimarina (strain NCIMB 400).